A 118-amino-acid chain; its full sequence is Acidic phospholipase A2 (118 aa).

Ca(2+) contacts are provided by Tyr25, Gly27, and Gly29. His45 is a catalytic residue. Asp46 contributes to the Ca(2+) binding site. Asp86 is an active-site residue.

It belongs to the phospholipase A2 family. Group II subfamily. D49 sub-subfamily. Requires Ca(2+) as cofactor. Post-translationally, six disulfide bonds are present. In terms of tissue distribution, expressed by the venom gland.

It is found in the secreted. The catalysed reaction is a 1,2-diacyl-sn-glycero-3-phosphocholine + H2O = a 1-acyl-sn-glycero-3-phosphocholine + a fatty acid + H(+). PLA2 catalyzes the calcium-dependent hydrolysis of the 2-acyl groups in 3-sn-phosphoglycerides. This is Acidic phospholipase A2 from Bitis gabonica (Gaboon adder).